The following is a 232-amino-acid chain: 7-cyano-7-deazaguanine synthase (232 aa).

7-17 lines the ATP pocket; the sequence is CSGGLDSVSLA. Zn(2+)-binding residues include C185, C193, C196, and C199.

The protein belongs to the QueC family. Zn(2+) serves as cofactor.

It carries out the reaction 7-carboxy-7-deazaguanine + NH4(+) + ATP = 7-cyano-7-deazaguanine + ADP + phosphate + H2O + H(+). It functions in the pathway purine metabolism; 7-cyano-7-deazaguanine biosynthesis. In terms of biological role, catalyzes the ATP-dependent conversion of 7-carboxy-7-deazaguanine (CDG) to 7-cyano-7-deazaguanine (preQ(0)). This is 7-cyano-7-deazaguanine synthase from Chelativorans sp. (strain BNC1).